The sequence spans 540 residues: Solute carrier family 2, facilitated glucose transporter member 9 (540 aa).

The segment at 1–31 is disordered; it reads MARKQNRNSKELGLVPLTDDTSHAGPPGPGR. Residues 1–51 are Cytoplasmic-facing; that stretch reads MARKQNRNSKELGLVPLTDDTSHAGPPGPGRALLECDHLRSGVPGGRRRKD. Ser-9 is subject to Phosphoserine. Residues 52–72 traverse the membrane as a helical segment; sequence WSCSLLVASLAGAFGSSFLYG. The Extracellular portion of the chain corresponds to 73–107; the sequence is YNLSVVNAPTPYIKAFYNESWERRHGRPIDPDTLT. Asn-90 carries N-linked (GlcNAc...) asparagine glycosylation. A helical membrane pass occupies residues 108 to 128; it reads LLWSVTVSIFAIGGLVGTLIV. The Cytoplasmic portion of the chain corresponds to 129–140; the sequence is KMIGKVLGRKHT. A helical transmembrane segment spans residues 141 to 161; sequence LLANNGFAISAALLMACSLQA. Topologically, residues 162–171 are extracellular; it reads GAFEMLIVGR. The chain crosses the membrane as a helical span at residues 172–192; the sequence is FIMGIDGGVALSVLPMYLSEI. At 193–200 the chain is on the cytoplasmic side; it reads SPKEIRGS. A helical transmembrane segment spans residues 201–221; sequence LGQVTAIFICIGVFTGQLLGL. The Extracellular segment spans residues 222–231; it reads PELLGKESTW. Residues 232-252 form a helical membrane-spanning segment; sequence PYLFGVIVVPAVVQLLSLPFL. The Cytoplasmic portion of the chain corresponds to 253-316; it reads PDSPRYLLLE…LLRAPYVRWQ (64 aa). Residues 317-337 form a helical membrane-spanning segment; the sequence is VVTVIVTMACYQLCGLNAIWF. The Extracellular segment spans residues 338 to 354; the sequence is YTNSIFGKAGIPPAKIP. The helical transmembrane segment at 355–375 threads the bilayer; sequence YVTLSTGGIETLAAVFSGLVI. Over 376 to 381 the chain is Cytoplasmic; the sequence is EHLGRR. The helical transmembrane segment at 382 to 402 threads the bilayer; sequence PLLIGGFGLMGLFFGTLTITL. Residues 403–415 are Extracellular-facing; it reads TLQDHAPWVPYLS. A helical membrane pass occupies residues 416-436; the sequence is IVGILAIIASFCSGPGGIPFI. The Cytoplasmic segment spans residues 437–451; sequence LTGEFFQQSQRPAAF. A helical membrane pass occupies residues 452–472; the sequence is IIAGTVNWLSNFAVGLLFPFI. Residues 473-478 are Extracellular-facing; the sequence is QKSLDT. A helical membrane pass occupies residues 479 to 499; the sequence is YCFLVFATICITGAIYLYFVL. The Cytoplasmic portion of the chain corresponds to 500-540; it reads PETKNRTYAEISQAFSKRNKAYPPEEKIDSAVTDGKINGRP. Ser-515 carries the post-translational modification Phosphoserine. The segment at 519-540 is disordered; the sequence is KAYPPEEKIDSAVTDGKINGRP.

This sequence belongs to the major facilitator superfamily. Sugar transporter (TC 2.A.1.1) family. Glucose transporter subfamily. As to expression, most strongly expressed in basolateral membranes of proximal renal tubular cells, liver and placenta. Also detected in lung, blood leukocytes, heart skeletal muscle and chondrocytes from articular cartilage. Detected in kidney membrane (at protein level). In terms of tissue distribution, only detected in the apical membranes of polarized renal tubular cells and placenta. Detected in kidney membrane (at protein level).

It localises to the cell membrane. It is found in the basolateral cell membrane. Its subcellular location is the apical cell membrane. The catalysed reaction is urate(out) = urate(in). Its activity is regulated as follows. Extracellular glucose and urate accelerate urate efflux. Intracellular urate, glucose and fructose accelerate urate influx. No effect of extracellular urate, glucose or fructose on urate efflux. Intracellular urate and fructose slightly accelerate urate influx. Functionally, high-capacity urate transporter, which may play a role in the urate reabsorption by proximal tubules. May have a residual high-affinity, low-capacity glucose and fructose transporter activity. Transports urate at rates 45- to 60-fold faster than glucose. Does not transport galactose. May mediate small uptake of adenine but not of other nucleobases. This is Solute carrier family 2, facilitated glucose transporter member 9 from Homo sapiens (Human).